The sequence spans 290 residues: MKFAIFGNTYQAKKSSHAATLFKLLEKHGAEICVCREFHRFLKSDLKLNVKADDLFDENNFDADMVISIGGDGTFLKAARRVGNKGIPILGINTGRLGFLADVSPEEMEETIEEVYQNHYTVEERSVLQLLCDDKHLQNSPYALNEIAILKRDSSSMISIRTAINGAHLTTYQADGLIIATPTGSTAYSLSVGGPIIVPHSKTIAITPVAPHSLNVRPIVICDDWEITLDVESRSHNFLVAIDGSSETCKETTRLTIRRADYSIKVVKRFNHIFFDTLRTKMMWGADSRV.

The active-site Proton acceptor is Asp-72. NAD(+) contacts are provided by residues 72-73 (DG), Lys-77, 145-146 (NE), Asp-175, 186-191 (TAYSLS), and Ala-210.

Belongs to the NAD kinase family. It depends on a divalent metal cation as a cofactor.

The protein resides in the cytoplasm. It carries out the reaction NAD(+) + ATP = ADP + NADP(+) + H(+). Involved in the regulation of the intracellular balance of NAD and NADP, and is a key enzyme in the biosynthesis of NADP. Catalyzes specifically the phosphorylation on 2'-hydroxyl of the adenosine moiety of NAD to yield NADP. This chain is NAD kinase, found in Bacteroides fragilis (strain ATCC 25285 / DSM 2151 / CCUG 4856 / JCM 11019 / LMG 10263 / NCTC 9343 / Onslow / VPI 2553 / EN-2).